The chain runs to 367 residues: Flagellar P-ring protein (367 aa).

The signal sequence occupies residues 1 to 21 (MKIIQTFFIITLLWLSQGVQA).

It belongs to the FlgI family. In terms of assembly, the basal body constitutes a major portion of the flagellar organelle and consists of four rings (L,P,S, and M) mounted on a central rod.

Its subcellular location is the periplasm. The protein localises to the bacterial flagellum basal body. Functionally, assembles around the rod to form the L-ring and probably protects the motor/basal body from shearing forces during rotation. The chain is Flagellar P-ring protein from Nitrosococcus oceani (strain ATCC 19707 / BCRC 17464 / JCM 30415 / NCIMB 11848 / C-107).